Reading from the N-terminus, the 602-residue chain is Sodium- and chloride-dependent GABA transporter 2 (602 aa).

Residues 1 to 40 (MDSRVSGTTSNGETKPVCPGLEKAAEDGALQREQWSNKME) lie on the Cytoplasmic side of the membrane. 3 helical membrane passes run 41 to 61 (FLLSVAGEIIGLGNVWRFPYL), 68 to 88 (GAFFIPYLIFLFTCGIPVFLL), and 121 to 141 (IVTLLNIYYIIVLAWALFYLF). The Extracellular segment spans residues 142–206 (SSFTIDLPWG…GIQHLGALRW (65 aa)). A disulfide bridge links C153 with C162. N169 and N173 each carry an N-linked (GlcNAc...) asparagine glycan. A run of 2 helical transmembrane segments spans residues 207–227 (ELALCLLLAWVVCYFCIWKGV) and 233–253 (VVYFTATFPYLMLVVLLIRGV). N-linked (GlcNAc...) asparagine glycosylation occurs at N269. Helical transmembrane passes span 282-302 (AGTQIFFSFAICLGCLTALGS), 319-339 (FLNSGTSFVAGFAIFSILGFM), 366-386 (VVMLPFSPLWACCFFFMVVLL), 418-438 (VLILGVSVTSFLVGLVMLTEG), 453-473 (GMCLLFVAIFESFCVAWAYGA), 490-510 (PLIKYCWLFLTPAVCTATFLF), and 528-548 (WWGDALGWLLALSSMVCIPAW). Residues 549–602 (SCYKLSTLKGSFRERVRQLLCPAKDLPQGHREGPSAPATPRTSLLILTELEPHH) are Cytoplasmic-facing. T587 is modified (phosphothreonine). A Phosphoserine modification is found at S591.

This sequence belongs to the sodium:neurotransmitter symporter (SNF) (TC 2.A.22) family. SLC6A13 subfamily.

It is found in the cell membrane. The protein resides in the basolateral cell membrane. It carries out the reaction 4-aminobutanoate(out) + chloride(out) + 2 Na(+)(out) = 4-aminobutanoate(in) + chloride(in) + 2 Na(+)(in). The enzyme catalyses taurine(out) + chloride(out) + 2 Na(+)(out) = taurine(in) + chloride(in) + 2 Na(+)(in). The catalysed reaction is beta-alanine(out) + chloride(out) + 2 Na(+)(out) = beta-alanine(in) + chloride(in) + 2 Na(+)(in). It catalyses the reaction hypotaurine(out) + chloride(out) + 2 Na(+)(out) = hypotaurine(in) + chloride(in) + 2 Na(+)(in). In terms of biological role, mediates sodium- and chloride-dependent transport of gamma-aminobutyric acid (GABA). Can also mediate transport of beta-alanine, taurine and hypotaurine. The sequence is that of Sodium- and chloride-dependent GABA transporter 2 (SLC6A13) from Bos taurus (Bovine).